The sequence spans 59 residues: Small, acid-soluble spore protein H 1 (59 aa).

The protein belongs to the SspH family.

It localises to the spore core. This Bacillus anthracis protein is Small, acid-soluble spore protein H 1 (sspH1).